Reading from the N-terminus, the 144-residue chain is Short-chain diamines transporter (144 aa).

The next 4 helical transmembrane spans lie at 9 to 29 (IHAISYEGILLVIIAIALSFI), 35 to 55 (EVTGTLGVFMAVVSVFWNMIF), 76 to 96 (ILHAIGFEGGLLIATVPMIAY), and 103 to 123 (IDAFILDIGLTLCILVYTFIF).

It belongs to the proteobacterial antimicrobial compound efflux (PACE) (TC 2.A.117) family. In terms of assembly, exists in a monomer-homodimer equilibrium. The dimer is probably the functional form of the protein, and the assembly of the dimer is mediated by binding of chlorhexidine and promoted by high pH conditions.

The protein resides in the cell inner membrane. Protonation/deprotonation of Glu-15 may play an important role in transporter function. Cadaverin transport is inhibited in the presence of CCCP. Mediates the efflux of short-chain diamines when energized by an electrochemical gradient. Recognizes specifically the short-chain diamines cadaverine and putrescine as substrates, and promotes the active transport of these substrates in exchange for a cation. Protons are probably the primary source of energy for transport, however it was not possible to conclude with complete certainty that protons, rather than alternative cations such as Na(+) ions, are exchanged for substrates by AceI. In addition, is involved in resistance to the synthetic biocide chlorhexidine, a widely used antiseptic and disinfectant in both hospital and community settings. Interacts directly with chlorhexidine and mediates its efflux via an energy-dependent mechanism. The sequence is that of Short-chain diamines transporter from Acinetobacter baumannii (strain ATCC 17978 / DSM 105126 / CIP 53.77 / LMG 1025 / NCDC KC755 / 5377).